The following is a 156-amino-acid chain: Jun dimerization protein 2 (156 aa).

The tract at residues 56–95 is disordered; sequence KRPFDAIKSEDDDDDERKKRRREKNKVAAARCRNRKKERT. The 64-residue stretch at 70–133 folds into the bZIP domain; the sequence is DERKKRRREK…QQLIVMLNLH (64 aa). The basic motif stretch occupies residues 72-94; sequence RKKRRREKNKVAAARCRNRKKER. Residues 98–126 are leucine-zipper; sequence LQKESERLEMLNSDLKSQIEELKSERQQL.

Belongs to the bZIP family. ATF subfamily.

The protein resides in the nucleus. In terms of biological role, component of the AP-1 transcription factor that represses transactivation mediated by the Jun family of proteins. The polypeptide is Jun dimerization protein 2 (jdp2) (Danio rerio (Zebrafish)).